A 1053-amino-acid chain; its full sequence is Polyphosphate kinase (1053 aa).

Disordered stretches follow at residues 23–155 (LKIN…QLME), 200–245 (VQNP…TKSK), and 302–328 (NNNNNDFKSSTMIGKPFSSGGDGSTSP). Over residues 32–50 (STTTTTSTTTTTTTTTSTS) the composition is skewed to low complexity. Positions 81–102 (VDFEDDYDEESSSFDEEDEDSA) are enriched in acidic residues. The segment covering 143 to 155 (TTANPVQNCQLME) has biased composition (polar residues). Residues 215–239 (SSGSSSSSSSNNNNSNSNSNGNCNS) are compositionally biased toward low complexity. His-800 serves as the catalytic Phosphohistidine intermediate. The disordered stretch occupies residues 1027 to 1053 (RSSPIDEDSQTQFMNQTNQKHPVIWSK). Positions 1036–1046 (QTQFMNQTNQK) are enriched in polar residues.

This sequence belongs to the polyphosphate kinase 1 (PPK1) family. As to quaternary structure, hexamer. May form higher oligomeric structures in the presence of ATP.

Its subcellular location is the vesicle. It catalyses the reaction [phosphate](n) + ATP = [phosphate](n+1) + ADP. In terms of biological role, catalyzes the reversible transfer of the terminal phosphate of ATP to form a long-chain polyphosphate (polyP). Produces polyP in a broad range of chain lengths (50-300 Pi residues). Involved in development (growth and fruiting body formation), sporulation, phagocytosis, cell division and the late stages of cytokinesis. The protein is Polyphosphate kinase (ppkA) of Dictyostelium discoideum (Social amoeba).